The sequence spans 396 residues: MAKAKFERTKPHVNVGTIGHVDHGKTTLTAALTKIGAERFGGEFKAYDAIDAAPEEKARGITISTAHVEYESPTRHYAHVDCPGHADYVKNMITGAAQMDGAILVCSAADGPMPQTREHILLSRQVGVPHIVVFLNKADMVDDAELLELVEMEVRELLSKYDFPGDDTPIIHGSARLALDGDQSDIGVPAILKLVEALDSFIPEPTRDVDRPFLMPVEDVFSISGRGTVVTGRIERGIIKVGDEIEIVGIRDTQKTTVTGVEMFRKLLDQGQAGDNAGLLLRGTKRDDVERGQVLCKPGSIKPHTEFEAEVYVLSKDEGGRHTPFFKGYRPQFYFRTTDITGACQLPEGVEMVMPGDNVKMVVTLINPVAMDEGLRFAIREGGRTVGAGVVAKIIK.

One can recognise a tr-type G domain in the interval 10 to 206 (KPHVNVGTIG…ALDSFIPEPT (197 aa)). The tract at residues 19–26 (GHVDHGKT) is G1. 19-26 (GHVDHGKT) serves as a coordination point for GTP. Residue threonine 26 coordinates Mg(2+). A G2 region spans residues 60 to 64 (GITIS). A G3 region spans residues 81–84 (DCPG). GTP contacts are provided by residues 81-85 (DCPGH) and 136-139 (NKAD). Residues 136–139 (NKAD) are G4. Residues 174 to 176 (SAR) are G5.

The protein belongs to the TRAFAC class translation factor GTPase superfamily. Classic translation factor GTPase family. EF-Tu/EF-1A subfamily. In terms of assembly, monomer.

It localises to the cytoplasm. The catalysed reaction is GTP + H2O = GDP + phosphate + H(+). GTP hydrolase that promotes the GTP-dependent binding of aminoacyl-tRNA to the A-site of ribosomes during protein biosynthesis. The polypeptide is Elongation factor Tu (Xanthomonas euvesicatoria pv. vesicatoria (strain 85-10) (Xanthomonas campestris pv. vesicatoria)).